A 92-amino-acid polypeptide reads, in one-letter code: Small ribosomal subunit protein bS18 (92 aa).

Residues 1 to 27 form a disordered region; it reads MTQQSNSADRKPRGKGPKRPRKPKVDP. The span at 12–22 shows a compositional bias: basic residues; the sequence is PRGKGPKRPRK.

The protein belongs to the bacterial ribosomal protein bS18 family. Part of the 30S ribosomal subunit. Forms a tight heterodimer with protein bS6.

Its function is as follows. Binds as a heterodimer with protein bS6 to the central domain of the 16S rRNA, where it helps stabilize the platform of the 30S subunit. The chain is Small ribosomal subunit protein bS18 from Deinococcus deserti (strain DSM 17065 / CIP 109153 / LMG 22923 / VCD115).